We begin with the raw amino-acid sequence, 338 residues long: Glyceraldehyde-3-phosphate dehydrogenase, cytosolic (338 aa).

Residues 2 to 153 (ADKKIKIGIN…YKSDLNIVSN (152 aa)) form a binding to NAD region. Residues 15-16 (RI) and Asp-37 each bind NAD(+). The interval 56–75 (GQWKHNELKVKDEKTLLFGE) is external loop. Arg-84 provides a ligand contact to NAD(+). Positions 154-338 (ASCTTNCLAP…VDLIIHMSKA (185 aa)) are catalytic. Position 155 to 157 (155 to 157 (SCT)) interacts with D-glyceraldehyde 3-phosphate. Residue Cys-156 is the Nucleophile of the active site. S-nitrosocysteine occurs at positions 156 and 160. The interval 183–206 (HSITATQKTVDGPSMKDWRGGRAA) is S-loop. Residues Thr-186, 215–216 (TG), and Arg-238 contribute to the D-glyceraldehyde 3-phosphate site. NAD(+) is bound at residue Asn-320.

It belongs to the glyceraldehyde-3-phosphate dehydrogenase family. Homotetramer.

Its subcellular location is the cytoplasm. It catalyses the reaction D-glyceraldehyde 3-phosphate + phosphate + NAD(+) = (2R)-3-phospho-glyceroyl phosphate + NADH + H(+). Its pathway is carbohydrate degradation; glycolysis; pyruvate from D-glyceraldehyde 3-phosphate: step 1/5. Functionally, key enzyme in glycolysis that catalyzes the first step of the pathway by converting D-glyceraldehyde 3-phosphate (G3P) into 3-phospho-D-glyceroyl phosphate. Essential for the maintenance of cellular ATP levels and carbohydrate metabolism. This chain is Glyceraldehyde-3-phosphate dehydrogenase, cytosolic (GAPC), found in Sinapis alba (White mustard).